A 590-amino-acid polypeptide reads, in one-letter code: MERGPQMANRIEGKAVDKTSIKHFVKLIRAAKPRYLFFVIGIVAGIIGTLIQLQVPKMVQPLINSFGHGVNGGKVALVIALYIGSAAVSAIAAIVLGIFGESVVKNLRTRVWDKMIHLPVKYFDEVKTGEMSSRLANDTTQVKNLIANSIPQAFTSILLLVGSIIFMLQMQWRLTLAMIIAVPIVMLIMFPIMTFGQKIGWTRQDSLANFQGIASESLSEIRLVKSSNAEKQASKKAENDVNALYKIGVKEAVFDGLMSPVMMLSMMLMIFGLLAYGIYLISTGVMSLGTLLGMMMYLMNLIGVVPTVATFFTELAKASGSTGRLTELLDEEQEVLHQGDSLDLEGKTLSAHHVDFAYDDSEQILHDISFEAQPNSIIAFAGPSGGGKSTIFSLLERFYQPTAGEITIGGQPIDSVSLENWRSQIGFVSQDSAIMAGTIRENLTYGLEGNFTDEDLWQVLDLAFARSFVENMPDQLNTEVGERGVKISGGQRQRLAIARAFLRNPKILMLDEATASLDSESESMVQRALDSLMKGRTTLVIAHRLSTIVDADKIYFIEKGEITGSGKHNELVATHPLYAKYVSEQLTVGQ.

6 helical membrane passes run 35–55 (YLFF…QLQV), 79–99 (IALY…LGIF), 150–170 (IPQA…MLQM), 176–196 (LAMI…MTFG), 261–281 (VMML…IYLI), and 292–312 (LGMM…ATFF). Positions 38–317 (FVIGIVAGII…VATFFTELAK (280 aa)) constitute an ABC transmembrane type-1 domain. Positions 349–584 (LSAHHVDFAY…HPLYAKYVSE (236 aa)) constitute an ABC transporter domain. Position 382–389 (382–389 (GPSGGGKS)) interacts with ATP.

The protein belongs to the ABC transporter superfamily. Multidrug exporter LmrA (TC 3.A.1.117.1) family. As to quaternary structure, homodimer.

The protein localises to the cell membrane. The catalysed reaction is ATP + H2O + xenobioticSide 1 = ADP + phosphate + xenobioticSide 2.. In terms of biological role, efflux transporter for a variety of amphiphilic cationic compounds, including antibiotics. This Lactococcus lactis subsp. cremoris (strain MG1363) protein is Multidrug resistance ABC transporter ATP-binding and permease protein (lmrA).